We begin with the raw amino-acid sequence, 217 residues long: Protein GrpE (217 aa).

The protein belongs to the GrpE family. Homodimer.

It is found in the cytoplasm. In terms of biological role, participates actively in the response to hyperosmotic and heat shock by preventing the aggregation of stress-denatured proteins, in association with DnaK and GrpE. It is the nucleotide exchange factor for DnaK and may function as a thermosensor. Unfolded proteins bind initially to DnaJ; upon interaction with the DnaJ-bound protein, DnaK hydrolyzes its bound ATP, resulting in the formation of a stable complex. GrpE releases ADP from DnaK; ATP binding to DnaK triggers the release of the substrate protein, thus completing the reaction cycle. Several rounds of ATP-dependent interactions between DnaJ, DnaK and GrpE are required for fully efficient folding. In Mycoplasma pneumoniae (strain ATCC 29342 / M129 / Subtype 1) (Mycoplasmoides pneumoniae), this protein is Protein GrpE.